We begin with the raw amino-acid sequence, 373 residues long: 3-dehydroquinate synthase (373 aa).

NAD(+)-binding positions include 67 to 72, 101 to 105, 125 to 126, Lys138, and Lys147; these read EGEETK, GVILD, and TT. Positions 180, 240, and 256 each coordinate Zn(2+).

Belongs to the sugar phosphate cyclases superfamily. Dehydroquinate synthase family. The cofactor is NAD(+). Requires Co(2+) as cofactor. Zn(2+) is required as a cofactor.

It is found in the cytoplasm. The catalysed reaction is 7-phospho-2-dehydro-3-deoxy-D-arabino-heptonate = 3-dehydroquinate + phosphate. It participates in metabolic intermediate biosynthesis; chorismate biosynthesis; chorismate from D-erythrose 4-phosphate and phosphoenolpyruvate: step 2/7. Catalyzes the conversion of 3-deoxy-D-arabino-heptulosonate 7-phosphate (DAHP) to dehydroquinate (DHQ). The protein is 3-dehydroquinate synthase of Chlamydia trachomatis serovar A (strain ATCC VR-571B / DSM 19440 / HAR-13).